The chain runs to 562 residues: Eukaryotic translation initiation factor 3 subunit L (562 aa).

The interval 1–29 is disordered; sequence MSHAKEDYDSSYDPYSYQADYDGHTGDPK. Low complexity predominate over residues 11-20; that stretch reads SYDPYSYQAD. In terms of domain architecture, PCI spans 329–535; sequence DSIRVFANIL…IHIADTKVAR (207 aa).

This sequence belongs to the eIF-3 subunit L family. In terms of assembly, component of the eukaryotic translation initiation factor 3 (eIF-3) complex, which is composed of 13 subunits: eif3a, eif3b, eif3c, eif3d, eif3e, eif3f, eif3g, eif3h, eif3i, eif3j, eif3k, eif3l and eif3m.

Its subcellular location is the cytoplasm. In terms of biological role, component of the eukaryotic translation initiation factor 3 (eIF-3) complex, which is involved in protein synthesis of a specialized repertoire of mRNAs and, together with other initiation factors, stimulates binding of mRNA and methionyl-tRNAi to the 40S ribosome. The eIF-3 complex specifically targets and initiates translation of a subset of mRNAs involved in cell proliferation. The protein is Eukaryotic translation initiation factor 3 subunit L (eif3l) of Xenopus laevis (African clawed frog).